The primary structure comprises 260 residues: tRNA1(Val) (adenine(37)-N6)-methyltransferase (260 aa).

Belongs to the methyltransferase superfamily. tRNA (adenine-N(6)-)-methyltransferase family.

The protein resides in the cytoplasm. It carries out the reaction adenosine(37) in tRNA1(Val) + S-adenosyl-L-methionine = N(6)-methyladenosine(37) in tRNA1(Val) + S-adenosyl-L-homocysteine + H(+). Specifically methylates the adenine in position 37 of tRNA(1)(Val) (anticodon cmo5UAC). The polypeptide is tRNA1(Val) (adenine(37)-N6)-methyltransferase (Serratia proteamaculans (strain 568)).